The following is a 210-amino-acid chain: ATP phosphoribosyltransferase (210 aa).

The protein belongs to the ATP phosphoribosyltransferase family. Short subfamily. In terms of assembly, heteromultimer composed of HisG and HisZ subunits.

It localises to the cytoplasm. The catalysed reaction is 1-(5-phospho-beta-D-ribosyl)-ATP + diphosphate = 5-phospho-alpha-D-ribose 1-diphosphate + ATP. It participates in amino-acid biosynthesis; L-histidine biosynthesis; L-histidine from 5-phospho-alpha-D-ribose 1-diphosphate: step 1/9. Catalyzes the condensation of ATP and 5-phosphoribose 1-diphosphate to form N'-(5'-phosphoribosyl)-ATP (PR-ATP). Has a crucial role in the pathway because the rate of histidine biosynthesis seems to be controlled primarily by regulation of HisG enzymatic activity. The polypeptide is ATP phosphoribosyltransferase (Petrotoga mobilis (strain DSM 10674 / SJ95)).